Here is a 365-residue protein sequence, read N- to C-terminus: Histidinol-phosphate aminotransferase (365 aa).

K227 carries the N6-(pyridoxal phosphate)lysine modification.

The protein belongs to the class-II pyridoxal-phosphate-dependent aminotransferase family. Histidinol-phosphate aminotransferase subfamily. In terms of assembly, homodimer. Pyridoxal 5'-phosphate serves as cofactor.

It carries out the reaction L-histidinol phosphate + 2-oxoglutarate = 3-(imidazol-4-yl)-2-oxopropyl phosphate + L-glutamate. The protein operates within amino-acid biosynthesis; L-histidine biosynthesis; L-histidine from 5-phospho-alpha-D-ribose 1-diphosphate: step 7/9. The polypeptide is Histidinol-phosphate aminotransferase (Polaromonas naphthalenivorans (strain CJ2)).